Consider the following 309-residue polypeptide: Phytoene synthase (309 aa).

The protein belongs to the phytoene/squalene synthase family.

It catalyses the reaction 2 (2E,6E,10E)-geranylgeranyl diphosphate = 15-cis-phytoene + 2 diphosphate. Its pathway is carotenoid biosynthesis; phytoene biosynthesis; all-trans-phytoene from geranylgeranyl diphosphate: step 1/1. Catalyzes the reaction from prephytoene diphosphate to phytoene. This Arthrospira platensis (Spirulina platensis) protein is Phytoene synthase (crtB).